The chain runs to 358 residues: Probable branched-chain-amino-acid aminotransferase (358 aa).

Lys-196 is modified (N6-(pyridoxal phosphate)lysine).

Belongs to the class-IV pyridoxal-phosphate-dependent aminotransferase family. The cofactor is pyridoxal 5'-phosphate.

The enzyme catalyses L-leucine + 2-oxoglutarate = 4-methyl-2-oxopentanoate + L-glutamate. It carries out the reaction L-isoleucine + 2-oxoglutarate = (S)-3-methyl-2-oxopentanoate + L-glutamate. The catalysed reaction is L-valine + 2-oxoglutarate = 3-methyl-2-oxobutanoate + L-glutamate. It participates in amino-acid biosynthesis; L-isoleucine biosynthesis; L-isoleucine from 2-oxobutanoate: step 4/4. It functions in the pathway amino-acid biosynthesis; L-leucine biosynthesis; L-leucine from 3-methyl-2-oxobutanoate: step 4/4. Its pathway is amino-acid biosynthesis; L-valine biosynthesis; L-valine from pyruvate: step 4/4. Acts on leucine, isoleucine and valine. This Staphylococcus epidermidis (strain ATCC 35984 / DSM 28319 / BCRC 17069 / CCUG 31568 / BM 3577 / RP62A) protein is Probable branched-chain-amino-acid aminotransferase (ilvE).